The chain runs to 571 residues: Cytochrome P450 monooxygenase g430 (571 aa).

Residues 8–28 (GALIWVVTSYILYAIISNFII) traverse the membrane as a helical segment. Heme is bound at residue Cys471. A disordered region spans residues 552 to 571 (CPLPAEAKLPKSRKPIGTAS).

It belongs to the cytochrome P450 family. Heme is required as a cofactor.

The protein localises to the membrane. Its pathway is mycotoxin biosynthesis. Functionally, cytochrome P450 monooxygenase; part of the gene cluster that mediates the biosynthesis of 1233A, a natural compound known as an inhibitor of HMG-CoA synthase in the mevalonate pathway and with antibacterial and antifungal activities. The highly reducing polyketide synthase g433 is responsible for the 1233A backbone biosynthesis and the cytochrome P450 monooxygenase g430 catalyzes oxidation of the backbone. This Fusarium sp protein is Cytochrome P450 monooxygenase g430.